Here is a 404-residue protein sequence, read N- to C-terminus: Cysteine desulfurase IscS (404 aa).

Residues 75–76 (AT), N155, Q183, and 203–205 (SGH) contribute to the pyridoxal 5'-phosphate site. K206 carries the post-translational modification N6-(pyridoxal phosphate)lysine. T243 lines the pyridoxal 5'-phosphate pocket. Residue C328 is the Cysteine persulfide intermediate of the active site. Residue C328 coordinates [2Fe-2S] cluster.

The protein belongs to the class-V pyridoxal-phosphate-dependent aminotransferase family. NifS/IscS subfamily. As to quaternary structure, homodimer. Forms a heterotetramer with IscU, interacts with other sulfur acceptors. The cofactor is pyridoxal 5'-phosphate.

Its subcellular location is the cytoplasm. It carries out the reaction (sulfur carrier)-H + L-cysteine = (sulfur carrier)-SH + L-alanine. Its pathway is cofactor biosynthesis; iron-sulfur cluster biosynthesis. Master enzyme that delivers sulfur to a number of partners involved in Fe-S cluster assembly, tRNA modification or cofactor biosynthesis. Catalyzes the removal of elemental sulfur atoms from cysteine to produce alanine. Functions as a sulfur delivery protein for Fe-S cluster synthesis onto IscU, an Fe-S scaffold assembly protein, as well as other S acceptor proteins. In Shewanella sp. (strain MR-4), this protein is Cysteine desulfurase IscS.